Here is a 320-residue protein sequence, read N- to C-terminus: Phospho-N-acetylmuramoyl-pentapeptide-transferase (320 aa).

The next 10 helical transmembrane spans lie at 6-26, 54-74, 81-101, 117-137, 145-165, 175-195, 200-220, 226-246, 251-271, and 300-320; these read FLTP…LFIG, MGGL…AIWL, LWIA…DDFI, LAGQ…EGFS, IGTI…LVGF, IDGL…IIAF, IDVA…LIFN, IFMG…MSIL, FSLL…MLQV, and RIDI…LLIF.

The protein belongs to the glycosyltransferase 4 family. MraY subfamily. It depends on Mg(2+) as a cofactor.

The protein resides in the cell membrane. It catalyses the reaction UDP-N-acetyl-alpha-D-muramoyl-L-alanyl-gamma-D-glutamyl-L-lysyl-D-alanyl-D-alanine + di-trans,octa-cis-undecaprenyl phosphate = Mur2Ac(oyl-L-Ala-gamma-D-Glu-L-Lys-D-Ala-D-Ala)-di-trans,octa-cis-undecaprenyl diphosphate + UMP. Its pathway is cell wall biogenesis; peptidoglycan biosynthesis. Functionally, catalyzes the initial step of the lipid cycle reactions in the biosynthesis of the cell wall peptidoglycan: transfers peptidoglycan precursor phospho-MurNAc-pentapeptide from UDP-MurNAc-pentapeptide onto the lipid carrier undecaprenyl phosphate, yielding undecaprenyl-pyrophosphoryl-MurNAc-pentapeptide, known as lipid I. The protein is Phospho-N-acetylmuramoyl-pentapeptide-transferase of Latilactobacillus sakei subsp. sakei (strain 23K) (Lactobacillus sakei subsp. sakei).